Reading from the N-terminus, the 863-residue chain is Receptor-like protein 9DC1 (863 aa).

Positions 1–21 are cleaved as a signal peptide; it reads MGCVKLVFFMLYVFLFQLVSS. Residues 22–812 are Extracellular-facing; it reads SSLPHLCPED…EEDSPMISWQ (791 aa). The segment at 24 to 90 is N-cap; the sequence is LPHLCPEDQA…GVHCDETTGQ (67 aa). N-linked (GlcNAc...) asparagine glycosylation is found at N71 and N108. The LRR 1; degenerate repeat unit spans residues 91–114; that stretch reads VIALDLRCSQLQGKFHSNSSLFQL. LRR repeat units follow at residues 115–138 and 140–163; these read SNLK…KFGE and SDLT…ISHL. The stretch at 164 to 190 is one LRR 4; degenerate repeat; that stretch reads SKLHVLLIGDQYGLSIVPHNFEPLLKN. N190, N203, and N211 each carry an N-linked (GlcNAc...) asparagine glycan. LRR repeat units follow at residues 191–213, 214–237, 240–262, 264–286, 287–311, and 312–336; these read LTQL…SNFS, SHLT…VFHL, LEFL…KWNS, ASLM…SFSH, LTSL…LWNL, and TNIE…IFEK. N261 is a glycosylation site (N-linked (GlcNAc...) asparagine). 2 N-linked (GlcNAc...) asparagine glycosylation sites follow: N299 and N310. One copy of the LRR 11; degenerate repeat lies at 337-357; sequence LKKLSLFRNDNLDGGLEFLSF. 15 LRR repeats span residues 358–382, 383–406, 408–428, 429–452, 454–476, 477–500, 502–524, 525–549, 551–572, 573–597, 599–623, 667–690, 691–714, 715–739, and 741–759; these read NTQL…ISGL, QNLE…IFSL, SLVE…EFKS, KTLS…LLNQ, NLQL…ICNL, KTLI…VVER, EYLS…TFSV, GNIL…MINC, YLTL…WLGY, LFQL…GNTN, FMGL…ILGN, LDSN…IIGD, LVGL…SFQN, LSVL…LASL, and FLEV…IPKG. N-linked (GlcNAc...) asparagine glycosylation is found at N378, N396, and N416. A glycan (N-linked (GlcNAc...) asparagine) is linked at N464. N519 is a glycosylation site (N-linked (GlcNAc...) asparagine). N563 is a glycosylation site (N-linked (GlcNAc...) asparagine). Residues N674, N698, and N714 are each glycosylated (N-linked (GlcNAc...) asparagine). 2 N-linked (GlcNAc...) asparagine glycosylation sites follow: N746 and N767. The interval 760–812 is C-cap/acidic domain; it reads KQFDSFGNTSYQGNDGLRGFPLSKLCGGEDQVTTPAELDQEEEEEDSPMISWQ. The chain crosses the membrane as a helical span at residues 813 to 833; the sequence is GVLVGYGCGLVIGLSVIYIMW. Residues 834 to 863 lie on the Cytoplasmic side of the membrane; it reads STQYPAWFSRMDLKLEHIITTKMKKHKKRY.

It belongs to the RLP family.

Its subcellular location is the cell membrane. Functionally, involved in plant defense. Confers resistance to the fungal pathogen C.fulvum through recognition of the AVR9 elicitor protein. The sequence is that of Receptor-like protein 9DC1 from Solanum pimpinellifolium (Currant tomato).